Reading from the N-terminus, the 1227-residue chain is Tyrosine-protein kinase receptor ver-3 (1227 aa).

An N-terminal signal peptide occupies residues 1-17 (MKLKLTVLLILVHASAS). Over 18 to 764 (YKPPAIEVED…VQVNNAPKGS (747 aa)) the chain is Extracellular. Residues 20-110 (PPAIEVEDYQ…RESDTGTYSC (91 aa)) form the Ig-like C2-type 1 domain. A disulfide bond links cysteine 52 and cysteine 110. Residues asparagine 119, asparagine 211, asparagine 245, asparagine 255, asparagine 381, asparagine 425, and asparagine 528 are each glycosylated (N-linked (GlcNAc...) asparagine). An Ig-like C2-type 2 domain is found at 200–325 (VNFECRYKKE…EHENKETKYT (126 aa)). Cysteine 204 and cysteine 313 are disulfide-bonded. Ig-like C2-type domains are found at residues 565–666 (PHHE…TSID) and 673–758 (PSIT…VQVN). Cystine bridges form between cysteine 592–cysteine 650 and cysteine 696–cysteine 740. An N-linked (GlcNAc...) asparagine glycan is attached at asparagine 697. Residues 765-785 (LFFYWFLALLLLISIIAVFLL) traverse the membrane as a helical segment. The Cytoplasmic segment spans residues 786–1227 (TCKLRASNRL…ERYLIVESHA (442 aa)). Positions 847 to 1175 (LEILNPIGSG…HMRDSSSQFL (329 aa)) constitute a Protein kinase domain. ATP-binding positions include 853–861 (IGSGHFGVV) and lysine 886. Aspartate 1030 serves as the catalytic Proton acceptor. The segment at 1194 to 1227 (DWIQDSRPDVPNVSFQKSPKKQKEERYLIVESHA) is disordered. Basic and acidic residues predominate over residues 1214-1227 (KQKEERYLIVESHA).

It belongs to the protein kinase superfamily. Tyr protein kinase family. Expressed in the ALA neuron.

It is found in the cell membrane. It catalyses the reaction L-tyrosyl-[protein] + ATP = O-phospho-L-tyrosyl-[protein] + ADP + H(+). Its function is as follows. Receptor tyrosine kinase which may be involved, downstream of pvf-1, in the positioning of ray 1, the most anterior ray sensillum in the male tail. The sequence is that of Tyrosine-protein kinase receptor ver-3 from Caenorhabditis elegans.